The sequence spans 1119 residues: Nuclear matrix constituent protein 1 (1119 aa).

2 coiled-coil regions span residues 140–226 (LAEL…LYQQ) and 328–488 (LQNR…LDER). 4 disordered regions span residues 846–884 (LDVE…AEEA), 903–974 (LASA…PTGR), 989–1015 (NGAL…EIPD), and 1046–1109 (GINA…EVSM). Basic residues-rich tracts occupy residues 859–876 (GNRK…RKRS) and 920–929 (KRTRNSRKRN). The segment covering 1075 to 1085 (TPEQSRGYQNQ) has biased composition (polar residues).

It belongs to the CRWN family.

It localises to the nucleus matrix. The protein localises to the nucleus lamina. In terms of biological role, architectural component of nuclear structure that plays different roles in controlling nuclear size and morphology. The chain is Nuclear matrix constituent protein 1 from Daucus carota subsp. sativus (Carrot).